Consider the following 187-residue polypeptide: Orotate phosphoribosyltransferase (187 aa).

5-phospho-alpha-D-ribose 1-diphosphate is bound at residue 110–118 (EDVVTTGGS). Orotate contacts are provided by Thr114 and Arg142.

Belongs to the purine/pyrimidine phosphoribosyltransferase family. PyrE subfamily. Homodimer. Mg(2+) serves as cofactor.

The enzyme catalyses orotidine 5'-phosphate + diphosphate = orotate + 5-phospho-alpha-D-ribose 1-diphosphate. Its pathway is pyrimidine metabolism; UMP biosynthesis via de novo pathway; UMP from orotate: step 1/2. Its function is as follows. Catalyzes the transfer of a ribosyl phosphate group from 5-phosphoribose 1-diphosphate to orotate, leading to the formation of orotidine monophosphate (OMP). This is Orotate phosphoribosyltransferase from Thermotoga maritima (strain ATCC 43589 / DSM 3109 / JCM 10099 / NBRC 100826 / MSB8).